The sequence spans 900 residues: Nuclear factor NF-kappa-B p100 subunit (900 aa).

Residues Ser23 and Ser161 each carry the phosphoserine modification. Positions Pro38–Leu343 constitute an RHD domain. The Nuclear localization signal signature appears at Arg337–Lys341. A GRR region spans residues Phe346–Gly377. The segment at Gly404–Gln435 is disordered. Phosphothreonine is present on Thr429. ANK repeat units follow at residues Asn487–Val519, Leu526–Leu555, His559–Gln591, Glu599–Ala628, Gly633–Ala663, and Ala667–Ala696. The interval Asn698–Leu734 is disordered. 3 positions are modified to phosphoserine: Ser713, Ser715, and Ser717. The stretch at Arg729–Leu758 is one ANK 7 repeat. Residues Ala764–Glu851 form the Death domain. Ser812 bears the Phosphoserine mark. The span at Gly849–Ser866 shows a compositional bias: basic and acidic residues. The tract at residues Gly849–His900 is disordered. Lys855 participates in a covalent cross-link: Glycyl lysine isopeptide (Lys-Gly) (interchain with G-Cter in ubiquitin). 2 positions are modified to phosphoserine; by MAP3K14: Ser866 and Ser870. A compositionally biased stretch (low complexity) spans Gly888–His900.

Component of the NF-kappa-B RelB-p52 complex. Homodimer; component of the NF-kappa-B p52-p52 complex. Component of the NF-kappa-B p65-p52 complex. Component of the NF-kappa-B p52-c-Rel complex. NFKB2/p52 interacts with NFKBIE. Component of a complex consisting of the NF-kappa-B p50-p50 homodimer and BCL3. Directly interacts with MEN1. Post-translationally, while translation occurs, the particular unfolded structure after the GRR repeat promotes the generation of p52 making it an acceptable substrate for the proteasome. This process is known as cotranslational processing. The processed form is active and the unprocessed form acts as an inhibitor (I kappa B-like), being able to form cytosolic complexes with NF-kappa B, trapping it in the cytoplasm. Complete folding of the region downstream of the GRR repeat precludes processing. In terms of processing, subsequent to MAP3K14-dependent serine phosphorylation, p100 polyubiquitination occurs then triggering its proteasome-dependent processing. Constitutive processing is tightly suppressed by its C-terminal processing inhibitory domain, named PID, which contains the death domain. Post-translationally, ubiquitinated by TRIM55; leading to processing by VCP and subsequent ubiquitin-dependent protein degradation by the proteasome.

It localises to the nucleus. Its subcellular location is the cytoplasm. Its function is as follows. NF-kappa-B is a pleiotropic transcription factor present in almost all cell types and is the endpoint of a series of signal transduction events that are initiated by a vast array of stimuli related to many biological processes such as inflammation, immunity, differentiation, cell growth, tumorigenesis and apoptosis. NF-kappa-B is a homo- or heterodimeric complex formed by the Rel-like domain-containing proteins RELA/p65, RELB, NFKB1/p105, NFKB1/p50, REL and NFKB2/p52. The dimers bind at kappa-B sites in the DNA of their target genes and the individual dimers have distinct preferences for different kappa-B sites that they can bind with distinguishable affinity and specificity. Different dimer combinations act as transcriptional activators or repressors, respectively. NF-kappa-B is controlled by various mechanisms of post-translational modification and subcellular compartmentalization as well as by interactions with other cofactors or corepressors. NF-kappa-B complexes are held in the cytoplasm in an inactive state complexed with members of the NF-kappa-B inhibitor (I-kappa-B) family. In a conventional activation pathway, I-kappa-B is phosphorylated by I-kappa-B kinases (IKKs) in response to different activators, subsequently degraded thus liberating the active NF-kappa-B complex which translocates to the nucleus. In a non-canonical activation pathway, the MAP3K14-activated CHUK/IKKA homodimer phosphorylates NFKB2/p100 associated with RelB, inducing its proteolytic processing to NFKB2/p52 and the formation of NF-kappa-B RelB-p52 complexes. The NF-kappa-B heterodimeric RelB-p52 complex is a transcriptional activator. The NF-kappa-B p52-p52 homodimer is a transcriptional repressor. NFKB2 appears to have dual functions such as cytoplasmic retention of attached NF-kappa-B proteins by p100 and generation of p52 by a cotranslational processing. The proteasome-mediated process ensures the production of both p52 and p100 and preserves their independent function. p52 binds to the kappa-B consensus sequence 5'-GGRNNYYCC-3', located in the enhancer region of genes involved in immune response and acute phase reactions. p52 and p100 are respectively the minor and major form; the processing of p100 being relatively poor. Isoform p49 is a subunit of the NF-kappa-B protein complex, which stimulates the HIV enhancer in synergy with p65. In concert with RELB, regulates the circadian clock by repressing the transcriptional activator activity of the CLOCK-BMAL1 heterodimer. The sequence is that of Nuclear factor NF-kappa-B p100 subunit (NFKB2) from Homo sapiens (Human).